An 875-amino-acid chain; its full sequence is Neurotrypsin (875 aa).

An N-terminal signal peptide occupies residues 1-20; the sequence is MTLARFALALLFGVLPEVVG. An N-linked (GlcNAc...) asparagine glycan is attached at asparagine 26. A disordered region spans residues 51–72; sequence QRHRRTRPPPPLPRFPRPPRAL. Residues 58–71 are compositionally biased toward pro residues; that stretch reads PPPPLPRFPRPPRA. The 73-residue stretch at 93-165 folds into the Kringle domain; sequence CPAGEPWVSV…GKVDWGYCDC (73 aa). 20 cysteine pairs are disulfide-bonded: cysteine 93–cysteine 165, cysteine 109–cysteine 149, cysteine 138–cysteine 163, cysteine 195–cysteine 259, cysteine 208–cysteine 269, cysteine 239–cysteine 249, cysteine 305–cysteine 369, cysteine 318–cysteine 379, cysteine 349–cysteine 359, cysteine 412–cysteine 475, cysteine 425–cysteine 485, cysteine 455–cysteine 465, cysteine 525–cysteine 589, cysteine 538–cysteine 599, cysteine 569–cysteine 579, cysteine 619–cysteine 750, cysteine 661–cysteine 677, cysteine 765–cysteine 831, cysteine 794–cysteine 808, and cysteine 821–cysteine 850. 4 consecutive SRCR domains span residues 170–271, 280–381, 387–487, and 500–601; these read VRLR…MCSF, IRLV…SCTP, IRLA…ACYP, and VRLM…ICDY. Residues 619 to 630 are zymogen activation region; the sequence is CGLRLLHRRQKR. In terms of domain architecture, Peptidase S1 spans 631–874; it reads IIGGKNSLRG…FVPWIKSVTK (244 aa). Histidine 676 serves as the catalytic Charge relay system. Asparagine 683 carries an N-linked (GlcNAc...) asparagine glycan. Aspartate 726 (charge relay system) is an active-site residue. Serine 825 serves as the catalytic Charge relay system.

Belongs to the peptidase S1 family.

It is found in the secreted. Functionally, plays a role in neuronal plasticity and the proteolytic action may subserve structural reorganizations associated with learning and memory operations. The polypeptide is Neurotrypsin (PRSS12) (Saguinus labiatus (Red-chested mustached tamarin)).